Consider the following 1373-residue polypeptide: DNA-directed RNA polymerase subunit beta (1373 aa).

It belongs to the RNA polymerase beta chain family. In terms of assembly, the RNAP catalytic core consists of 2 alpha, 1 beta, 1 beta' and 1 omega subunit. When a sigma factor is associated with the core the holoenzyme is formed, which can initiate transcription.

It carries out the reaction RNA(n) + a ribonucleoside 5'-triphosphate = RNA(n+1) + diphosphate. Its function is as follows. DNA-dependent RNA polymerase catalyzes the transcription of DNA into RNA using the four ribonucleoside triphosphates as substrates. This chain is DNA-directed RNA polymerase subunit beta, found in Rickettsia peacockii (strain Rustic).